A 432-amino-acid polypeptide reads, in one-letter code: Histidinol dehydrogenase (432 aa).

3 residues coordinate substrate: Ser-240, Gln-262, and His-265. Zn(2+) contacts are provided by Gln-262 and His-265. Active-site proton acceptor residues include Glu-330 and His-331. 4 residues coordinate substrate: His-331, Asp-364, Glu-418, and His-423. Asp-364 contributes to the Zn(2+) binding site. His-423 is a binding site for Zn(2+).

Belongs to the histidinol dehydrogenase family. Requires Zn(2+) as cofactor.

The catalysed reaction is L-histidinol + 2 NAD(+) + H2O = L-histidine + 2 NADH + 3 H(+). It participates in amino-acid biosynthesis; L-histidine biosynthesis; L-histidine from 5-phospho-alpha-D-ribose 1-diphosphate: step 9/9. Catalyzes the sequential NAD-dependent oxidations of L-histidinol to L-histidinaldehyde and then to L-histidine. This is Histidinol dehydrogenase from Wolinella succinogenes (strain ATCC 29543 / DSM 1740 / CCUG 13145 / JCM 31913 / LMG 7466 / NCTC 11488 / FDC 602W) (Vibrio succinogenes).